The sequence spans 224 residues: 7-cyano-7-deazaguanine synthase (224 aa).

9–19 (ISGGMDSTLCA) contacts ATP. Cys190, Cys198, Cys201, and Cys204 together coordinate Zn(2+).

Belongs to the QueC family. Zn(2+) is required as a cofactor.

It carries out the reaction 7-carboxy-7-deazaguanine + NH4(+) + ATP = 7-cyano-7-deazaguanine + ADP + phosphate + H2O + H(+). The protein operates within purine metabolism; 7-cyano-7-deazaguanine biosynthesis. In terms of biological role, catalyzes the ATP-dependent conversion of 7-carboxy-7-deazaguanine (CDG) to 7-cyano-7-deazaguanine (preQ(0)). In Campylobacter jejuni subsp. jejuni serotype O:6 (strain 81116 / NCTC 11828), this protein is 7-cyano-7-deazaguanine synthase.